Reading from the N-terminus, the 201-residue chain is ATP-dependent Clp protease proteolytic subunit (201 aa).

Ser101 acts as the Nucleophile in catalysis. His126 is a catalytic residue.

This sequence belongs to the peptidase S14 family. In terms of assembly, fourteen ClpP subunits assemble into 2 heptameric rings which stack back to back to give a disk-like structure with a central cavity, resembling the structure of eukaryotic proteasomes.

It is found in the cytoplasm. It catalyses the reaction Hydrolysis of proteins to small peptides in the presence of ATP and magnesium. alpha-casein is the usual test substrate. In the absence of ATP, only oligopeptides shorter than five residues are hydrolyzed (such as succinyl-Leu-Tyr-|-NHMec, and Leu-Tyr-Leu-|-Tyr-Trp, in which cleavage of the -Tyr-|-Leu- and -Tyr-|-Trp bonds also occurs).. In terms of biological role, cleaves peptides in various proteins in a process that requires ATP hydrolysis. Has a chymotrypsin-like activity. Plays a major role in the degradation of misfolded proteins. This chain is ATP-dependent Clp protease proteolytic subunit, found in Francisella tularensis subsp. tularensis (strain FSC 198).